The primary structure comprises 249 residues: ATP synthase subunit a, chloroplastic (249 aa).

Helical transmembrane passes span 38 to 58 (GQVL…SVIA), 97 to 117 (VPFV…GALI), 136 to 156 (INTT…AGLS), 201 to 221 (LVVA…MMLL), and 222 to 242 (GLFT…AYIG).

The protein belongs to the ATPase A chain family. In terms of assembly, F-type ATPases have 2 components, CF(1) - the catalytic core - and CF(0) - the membrane proton channel. CF(1) has five subunits: alpha(3), beta(3), gamma(1), delta(1), epsilon(1). CF(0) has four main subunits: a, b, b' and c.

The protein resides in the plastid. Its subcellular location is the chloroplast thylakoid membrane. Its function is as follows. Key component of the proton channel; it plays a direct role in the translocation of protons across the membrane. The polypeptide is ATP synthase subunit a, chloroplastic (Chlorokybus atmophyticus (Soil alga)).